Here is a 517-residue protein sequence, read N- to C-terminus: MPAPSAADFARLRSLVAIEDLDARQSRPIEEVFTGRELTTIPVGTAEDVAAAFAKARAAQRGWAHRPVAERAAIMERFRDLVAKNRDFLMDVAQAETGKARSAAQEEIVDMMLNARYYARQAVKLLAPKRVQGLLPGVVKTVVNHHPKGVVGVISPWNYPMALSISDSIPALLAGNAVVVKPDSQTPYCTLANAELLYEAGLPRDLFAVVPGPGSVVGTAIVENCDYLMFTGSTATGRTLAEQCGRRLIGFSAELGGKNPMIVTRGAKLDVAAKAATRACFSNAGQLCISIERIYVERAVADEFTAKFGEQVRSMRLAATYDFTADMGSLISEDQIKTVSGHVDDAKAKGATVIAGGNIRPDIGPRFYEPTVLTGVTDEMECARNETFGPVVSIYPVESVAEAIEKANDTEYGLNASVWAGSKTEGEAIAAQLQAGTVNVDEGYALAFGSTAAPMGGMKASGVGRRHGADGILKYTESQTVATSRVLNLDPPLGISGTLWQKAMTPMIRAVQKLPGR.

NADP(+)-binding positions include 157-158 (WN), 181-184 (KPDS), and 232-233 (GS). Glutamate 254 (proton acceptor) is an active-site residue. Leucine 255 provides a ligand contact to NADP(+). Catalysis depends on cysteine 288, which acts as the Nucleophile. Position 386 (glutamate 386) interacts with NADP(+).

The protein belongs to the aldehyde dehydrogenase family.

It carries out the reaction succinate semialdehyde + NADP(+) + H2O = succinate + NADPH + 2 H(+). Catalyzes the NADP(+)-dependent oxidation of succinate semialdehyde to succinate. Although it has succinate semialdehyde dehydrogenase activity, is likely to act physiologically on a different aldehyde(s). The polypeptide is Putative succinate-semialdehyde dehydrogenase [NADP(+)] (gabD2) (Mycolicibacterium smegmatis (strain ATCC 700084 / mc(2)155) (Mycobacterium smegmatis)).